The sequence spans 275 residues: Nitrogenase iron protein 1 (275 aa).

Position 9–16 (9–16 (GKGGIGKS)) interacts with ATP. A [4Fe-4S] cluster-binding site is contributed by cysteine 97. Arginine 100 is modified (ADP-ribosylarginine; by dinitrogenase reductase ADP-ribosyltransferase). Cysteine 132 contacts [4Fe-4S] cluster.

The protein belongs to the NifH/BchL/ChlL family. As to quaternary structure, homodimer. [4Fe-4S] cluster serves as cofactor. Post-translationally, the reversible ADP-ribosylation of Arg-100 inactivates the nitrogenase reductase and regulates nitrogenase activity.

The catalysed reaction is N2 + 8 reduced [2Fe-2S]-[ferredoxin] + 16 ATP + 16 H2O = H2 + 8 oxidized [2Fe-2S]-[ferredoxin] + 2 NH4(+) + 16 ADP + 16 phosphate + 6 H(+). Functionally, the key enzymatic reactions in nitrogen fixation are catalyzed by the nitrogenase complex, which has 2 components: the iron protein and the molybdenum-iron protein. The protein is Nitrogenase iron protein 1 (nifH1) of Methanothermobacter thermautotrophicus (strain ATCC 29096 / DSM 1053 / JCM 10044 / NBRC 100330 / Delta H) (Methanobacterium thermoautotrophicum).